Here is a 238-residue protein sequence, read N- to C-terminus: Probable transcriptional regulatory protein CAB166 (238 aa).

Belongs to the TACO1 family.

The protein localises to the cytoplasm. The sequence is that of Probable transcriptional regulatory protein CAB166 from Chlamydia abortus (strain DSM 27085 / S26/3) (Chlamydophila abortus).